The chain runs to 669 residues: DNA polymerase epsilon subunit B (669 aa).

A disordered region spans residues 96–115 (QISTRNGSADNLAKKAERSD).

Belongs to the DNA polymerase epsilon subunit B family. In terms of assembly, heterotetramer. Consists of four subunits: POL2, DPB2, DPB3 and DPB4.

Its subcellular location is the nucleus. As accessory component of the DNA polymerase epsilon (DNA polymerase II) participates in chromosomal DNA replication. The protein is DNA polymerase epsilon subunit B (DPB2) of Debaryomyces hansenii (strain ATCC 36239 / CBS 767 / BCRC 21394 / JCM 1990 / NBRC 0083 / IGC 2968) (Yeast).